The sequence spans 440 residues: Transposon Ty1-NL2 Gag polyprotein (440 aa).

4 stretches are compositionally biased toward polar residues: residues 1–23, 48–60, 71–97, and 129–152; these read MESQ…SVTS, TKAN…TPAS, SPQT…NQAN, and QFPQ…GNTF. Disordered regions lie at residues 1-97, 129-171, and 352-440; these read MESQ…NQAN, QFPQ…YVRP, and GSRN…PETY. The span at 153–165 shows a compositional bias: low complexity; it reads TDSSSADSDMTST. The segment at 299 to 401 is RNA-binding; that stretch reads NNGIHINNKV…NSKSKTARAH (103 aa). Over residues 402 to 418 the composition is skewed to low complexity; it reads NVSTSNNSPSTDNDSIS. Serine 416 bears the Phosphoserine mark. Residues 419-428 are compositionally biased toward polar residues; the sequence is KSTTEPIQLN. A compositionally biased stretch (basic and acidic residues) spans 429–440; sequence NKHDLHLRPETY.

Homotrimer.

It is found in the cytoplasm. Its function is as follows. Capsid protein (CA) is the structural component of the virus-like particle (VLP), forming the shell that encapsulates the retrotransposons dimeric RNA genome. The particles are assembled from trimer-clustered units and there are holes in the capsid shells that allow for the diffusion of macromolecules. CA also has nucleocapsid-like chaperone activity, promoting primer tRNA(i)-Met annealing to the multipartite primer-binding site (PBS), dimerization of Ty1 RNA and initiation of reverse transcription. This chain is Transposon Ty1-NL2 Gag polyprotein (TY1A-NL2), found in Saccharomyces cerevisiae (strain ATCC 204508 / S288c) (Baker's yeast).